The chain runs to 524 residues: Tubulin-specific chaperone E (524 aa).

At S2 the chain carries N-acetylserine. Positions 27 to 71 (GAVPPVAGLWLGVEWDNPERGKHDGSHEGTMYFKCRHPTGGSFVR) constitute a CAP-Gly domain. 7 LRR repeats span residues 154-175 (NIRVVNLSKNLLSTWDEVVLIA), 180-201 (DLEALDLSENKLQFPSDSPTLT), 206-227 (TLKTLVLNKTGITWTEVLHCAP), 231-253 (VLEELYLKSNNISISERPVNVLQ), 254-275 (KMRLLDLSSNPSIDESQLSLIA), 279-300 (RLEHLVLSDIGLSSIHFPDAEI), and 309-330 (ALKYLIVNDNQISEWSFINELD). The 39-residue stretch at 343–381 (NPLSKADKAEEIIIAKIAQLRTLNRCQILPEERRGAELD) folds into the LRRCT domain. K460 is modified (N6-acetyllysine). Phosphoserine is present on S492.

Belongs to the TBCE family. In terms of assembly, supercomplex made of cofactors A to E. Cofactors A and D function by capturing and stabilizing tubulin in a quasi-native conformation. Cofactor E binds to the cofactor D-tubulin complex; interaction with cofactor C then causes the release of tubulin polypeptides that are committed to the native state. Cofactors B and E can form a heterodimer which binds to alpha-tubulin and enhances their ability to dissociate tubulin heterodimers. Interacts with TBCD. In terms of tissue distribution, ubiquitously expressed.

Its subcellular location is the cytoplasm. The protein localises to the cytoskeleton. In terms of biological role, tubulin-folding protein; involved in the second step of the tubulin folding pathway and in the regulation of tubulin heterodimer dissociation. Required for correct organization of microtubule cytoskeleton and mitotic splindle, and maintenance of the neuronal microtubule network. This is Tubulin-specific chaperone E (Tbce) from Mus musculus (Mouse).